Consider the following 288-residue polypeptide: 4-hydroxybenzoate octaprenyltransferase (288 aa).

7 helical membrane passes run 38–58 (IAAQ…GVFL), 98–120 (ILFA…MTIW), 141–161 (LLQV…FSAV), 163–183 (ESLP…SVIY), 213–233 (LIIG…GSLA), 238–258 (VYYI…KLMV), and 268–288 (AFLN…LSYL).

It belongs to the UbiA prenyltransferase family. Requires Mg(2+) as cofactor.

It is found in the cell inner membrane. The enzyme catalyses all-trans-octaprenyl diphosphate + 4-hydroxybenzoate = 4-hydroxy-3-(all-trans-octaprenyl)benzoate + diphosphate. It participates in cofactor biosynthesis; ubiquinone biosynthesis. Functionally, catalyzes the prenylation of para-hydroxybenzoate (PHB) with an all-trans polyprenyl group. Mediates the second step in the final reaction sequence of ubiquinone-8 (UQ-8) biosynthesis, which is the condensation of the polyisoprenoid side chain with PHB, generating the first membrane-bound Q intermediate 3-octaprenyl-4-hydroxybenzoate. The sequence is that of 4-hydroxybenzoate octaprenyltransferase from Providencia stuartii.